The sequence spans 314 residues: Olfactory receptor 5G29 (314 aa).

The Extracellular segment spans residues 1–25; that stretch reads MEEKNQTIVMEFFFLGLTDHLYQKI. Residue asparagine 5 is glycosylated (N-linked (GlcNAc...) asparagine). Residues 26–46 form a helical membrane-spanning segment; sequence ALFITILFVYLVTLGGNLGMI. Residues 47–54 lie on the Cytoplasmic side of the membrane; the sequence is TLIWADPR. A helical transmembrane segment spans residues 55-75; that stretch reads LHTPMYFFLSHLSFVDMCSSS. Over 76-99 the chain is Extracellular; sequence SIAPKMLCDIFAEEKRISFMGCAA. Cysteine 97 and cysteine 189 are disulfide-bonded. A helical transmembrane segment spans residues 100-120; sequence QMWFFGFFVGTECFLLASMAY. The Cytoplasmic portion of the chain corresponds to 121–133; it reads DRYTAICKPLLYT. A helical transmembrane segment spans residues 134 to 154; the sequence is LLMSQRVCVHLVVGPYVFAII. The Extracellular portion of the chain corresponds to 155-196; sequence NITTHTTLAFCLPFCGSNTINHFFCDVSPLLSLACADSWVNK. A helical membrane pass occupies residues 197 to 217; that stretch reads VVLFVLSGAIGVFSGLIIIVS. Topologically, residues 218 to 237 are cytoplasmic; sequence YVSILMTIFKIQTADGKQKA. A helical transmembrane segment spans residues 238–258; the sequence is FSTCSSHLSAVSILYGTLFFI. Over 259–271 the chain is Extracellular; the sequence is YVRPSASFSLNIN. Residues 272-292 traverse the membrane as a helical segment; the sequence is KMISLFYTVVIPMLNPLIYSL. Topologically, residues 293–312 are cytoplasmic; sequence RNKEVKGAFRRKVQKKHFPA.

The protein belongs to the G-protein coupled receptor 1 family.

It localises to the cell membrane. Potential odorant receptor. In Mus musculus (Mouse), this protein is Olfactory receptor 5G29.